The following is a 473-amino-acid chain: Cysteine--tRNA ligase (473 aa).

C29 is a Zn(2+) binding site. The short motif at 31 to 41 (PTVYDRAHLGN) is the 'HIGH' region element. Zn(2+)-binding residues include C225, H250, and E254. The 'KMSKS' region signature appears at 281 to 285 (KMSKS). K284 provides a ligand contact to ATP.

This sequence belongs to the class-I aminoacyl-tRNA synthetase family. As to quaternary structure, monomer. Requires Zn(2+) as cofactor.

The protein resides in the cytoplasm. It carries out the reaction tRNA(Cys) + L-cysteine + ATP = L-cysteinyl-tRNA(Cys) + AMP + diphosphate. This is Cysteine--tRNA ligase from Roseobacter denitrificans (strain ATCC 33942 / OCh 114) (Erythrobacter sp. (strain OCh 114)).